Reading from the N-terminus, the 23-residue chain is Septenin 2d (23 aa).

Expressed in skin glands.

The protein localises to the secreted. May act as an antimicrobial peptide. The polypeptide is Septenin 2d (Osteopilus septentrionalis (Cuban treefrog)).